A 214-amino-acid chain; its full sequence is Probable transaldolase (214 aa).

Lys83 functions as the Schiff-base intermediate with substrate in the catalytic mechanism.

Belongs to the transaldolase family. Type 3B subfamily.

Its subcellular location is the cytoplasm. The catalysed reaction is D-sedoheptulose 7-phosphate + D-glyceraldehyde 3-phosphate = D-erythrose 4-phosphate + beta-D-fructose 6-phosphate. It participates in carbohydrate degradation; pentose phosphate pathway; D-glyceraldehyde 3-phosphate and beta-D-fructose 6-phosphate from D-ribose 5-phosphate and D-xylulose 5-phosphate (non-oxidative stage): step 2/3. Functionally, transaldolase is important for the balance of metabolites in the pentose-phosphate pathway. This is Probable transaldolase from Geotalea uraniireducens (strain Rf4) (Geobacter uraniireducens).